A 163-amino-acid chain; its full sequence is Probable ribosome biogenesis protein RLP24 (163 aa).

It belongs to the eukaryotic ribosomal protein eL24 family. Associated with nucleolar and cytoplasmic pre-60S particles. At the end of biogenesis it dissociates from cytoplasmic pre-60S particles and is likely to be exchanged for its ribosomal homolog, RPL24.

The protein resides in the nucleus. The protein localises to the nucleolus. In terms of biological role, involved in the biogenesis of the 60S ribosomal subunit. Ensures the docking of GTPBP4/NOG1 to pre-60S particles. The polypeptide is Probable ribosome biogenesis protein RLP24 (RSL24D1) (Homo sapiens (Human)).